We begin with the raw amino-acid sequence, 173 residues long: Lipoprotein signal peptidase (173 aa).

2 consecutive transmembrane segments (helical) span residues 67 to 87 (WISL…PHLG) and 92 to 112 (MGFG…FAFG). Active-site residues include D116 and D132. Residues 125–145 (FPVFNGADIAINLGLACLLIG) traverse the membrane as a helical segment. Residues 151–173 (SRTPAPARPASKQIREPTDTTGG) are disordered. A compositionally biased stretch (basic and acidic residues) spans 163–173 (QIREPTDTTGG).

Belongs to the peptidase A8 family.

The protein localises to the cell inner membrane. It carries out the reaction Release of signal peptides from bacterial membrane prolipoproteins. Hydrolyzes -Xaa-Yaa-Zaa-|-(S,diacylglyceryl)Cys-, in which Xaa is hydrophobic (preferably Leu), and Yaa (Ala or Ser) and Zaa (Gly or Ala) have small, neutral side chains.. It participates in protein modification; lipoprotein biosynthesis (signal peptide cleavage). Its function is as follows. This protein specifically catalyzes the removal of signal peptides from prolipoproteins. This is Lipoprotein signal peptidase from Gloeobacter violaceus (strain ATCC 29082 / PCC 7421).